The chain runs to 757 residues: NAD(P)H-quinone oxidoreductase subunit 5, chloroplastic (757 aa).

A run of 17 helical transmembrane segments spans residues 9–29 (WIIPFVPLPVTMSIGLGLLLV), 40–60 (WAFPSVSLLSIVMVFSADLSV), 89–109 (IDPLTSIMSILITTVGIMVLI), 122–139 (LRFFAYMSFSNTSMLGLV), 147–167 (IYIFWELVGMCSYLLIGFWFT), 185–205 (GDFGLLLGILGLYWITGSFEF), 219–239 (NGVNSLFATLCASLLFAGAVA), 258–278 (TPISALIHAATMVAAGIFLVA), 280–300 (LLPLFTVIPYIMNLISLIGVI), 327–347 (LGYIMLAPGIGSYRAALFHLI), 354–374 (ALLFLGSGSIIHSMEPIVGYS), 396–416 (MTFLLGTLSLCGIPPLACFWS), 425–445 (WLYSPIFAIIACATAGLTAFY), 544–564 (LLPLLVLVLFTLFVGFIGIPF), 607–627 (SIAYFGIFIASLLYGSVYLFF), 692–712 (GIMNGVGVSSFFVGEGIKYLG), and 718–738 (SYLFVYLSYVSIFLLIYIFFF).

Belongs to the complex I subunit 5 family. In terms of assembly, NDH is composed of at least 16 different subunits, 5 of which are encoded in the nucleus.

The protein resides in the plastid. It localises to the chloroplast thylakoid membrane. The enzyme catalyses a plastoquinone + NADH + (n+1) H(+)(in) = a plastoquinol + NAD(+) + n H(+)(out). It carries out the reaction a plastoquinone + NADPH + (n+1) H(+)(in) = a plastoquinol + NADP(+) + n H(+)(out). NDH shuttles electrons from NAD(P)H:plastoquinone, via FMN and iron-sulfur (Fe-S) centers, to quinones in the photosynthetic chain and possibly in a chloroplast respiratory chain. The immediate electron acceptor for the enzyme in this species is believed to be plastoquinone. Couples the redox reaction to proton translocation, and thus conserves the redox energy in a proton gradient. This Drimys granadensis protein is NAD(P)H-quinone oxidoreductase subunit 5, chloroplastic (ndhF).